The primary structure comprises 368 residues: Peptide chain release factor 2 (368 aa).

An N5-methylglutamine modification is found at Gln-250.

Belongs to the prokaryotic/mitochondrial release factor family. Post-translationally, methylated by PrmC. Methylation increases the termination efficiency of RF2.

The protein localises to the cytoplasm. Peptide chain release factor 2 directs the termination of translation in response to the peptide chain termination codons UGA and UAA. The protein is Peptide chain release factor 2 of Mycolicibacterium vanbaalenii (strain DSM 7251 / JCM 13017 / BCRC 16820 / KCTC 9966 / NRRL B-24157 / PYR-1) (Mycobacterium vanbaalenii).